The following is a 66-amino-acid chain: MRCVPVFLILLGLIASAPSVDARPQTKDDALASFHDSAKRHLQRLVNARKCCPESPPCCHYFGRRK.

A signal peptide spans M1 to A22. A propeptide spanning residues R23 to A48 is cleaved from the precursor. A Phenylalanine amide modification is found at F62.

Belongs to the conotoxin T superfamily. Contains 2 disulfide bonds that can be either 'C1-C3, C2-C4' or 'C1-C4, C2-C3', since these disulfide connectivities have been observed for conotoxins with cysteine framework V (for examples, see AC P0DQQ7 and AC P81755). Expressed by the venom duct.

The protein resides in the secreted. This Conus caracteristicus (Characteristic cone) protein is Conotoxin Ca5.2.